A 206-amino-acid polypeptide reads, in one-letter code: Probable N-acetyltransferase 14 (206 aa).

The N-acetyltransferase domain maps to 55–206; sequence LRFVLASFAL…TLVREFSKEL (152 aa). Residues 57–77 traverse the membrane as a helical segment; the sequence is FVLASFALALLLPVFLAVAAM.

This sequence belongs to the camello family.

Its subcellular location is the membrane. Its function is as follows. Probable acetyltransferase. Functionally, may act as a transcription factor regulating the expression of coproporphyrinogen oxidase by binding to a promoter regulatory element. In Bos taurus (Bovine), this protein is Probable N-acetyltransferase 14.